The following is a 327-amino-acid chain: RNA ligase 1 (327 aa).

Mg(2+) is required as a cofactor. Mn(2+) serves as cofactor. Post-translationally, AMPylates itself (auto-AMPylation).

The enzyme catalyses ATP + (ribonucleotide)n-3'-hydroxyl + 5'-phospho-(ribonucleotide)m = (ribonucleotide)n+m + AMP + diphosphate.. Functions as an RNA ligase, in vitro. The ligation reaction entails three nucleotidyl transfer steps. In the first step, the RNA ligase reacts with ATP in the absence of nucleic acid to form a covalent ligase-AMP intermediate and release pyrophosphate. In step 2, the ligase-AMP binds to the nucleic acid and transfers the adenylate to the 5'-PO4 terminus to form an adenylylated intermediate. In step 3, the RNA ligase directs the attack of the 3'-OH on the 5'-phosphoanhydride linkage, resulting in a repaired 3'-5' phosphodiester and release of AMP. Exhibits selectivity for single-stranded RNA substrates and may not have nick-sealing activity on double-stranded DNA-RNA hybrids. May play a role in maintaining RNA integrity under stress conditions, for example in response to reactive oxygen species (ROS). The polypeptide is RNA ligase 1 (Mus musculus (Mouse)).